A 435-amino-acid polypeptide reads, in one-letter code: Xylose isomerase (435 aa).

Catalysis depends on residues His100 and Asp103. 7 residues coordinate Mg(2+): Glu231, Glu267, His270, Asp295, Asp306, Asp308, and Asp338.

This sequence belongs to the xylose isomerase family. Homotetramer. It depends on Mg(2+) as a cofactor.

Its subcellular location is the cytoplasm. It carries out the reaction alpha-D-xylose = alpha-D-xylulofuranose. In Brucella suis (strain ATCC 23445 / NCTC 10510), this protein is Xylose isomerase.